The following is a 425-amino-acid chain: Tol-Pal system protein TolB (425 aa).

The signal sequence occupies residues 1-22; it reads MRNFLYCTGVLLLLWMSTSSQA.

Belongs to the TolB family. The Tol-Pal system is composed of five core proteins: the inner membrane proteins TolA, TolQ and TolR, the periplasmic protein TolB and the outer membrane protein Pal. They form a network linking the inner and outer membranes and the peptidoglycan layer.

It localises to the periplasm. Its function is as follows. Part of the Tol-Pal system, which plays a role in outer membrane invagination during cell division and is important for maintaining outer membrane integrity. The polypeptide is Tol-Pal system protein TolB (Nitrosomonas europaea (strain ATCC 19718 / CIP 103999 / KCTC 2705 / NBRC 14298)).